The primary structure comprises 218 residues: Glutathione S-transferase D7 (218 aa).

The region spanning 1–82 (MTPVLYYLPP…YLVSAYGKDE (82 aa)) is the GST N-terminal domain. Glutathione-binding positions include Ser11, 52 to 54 (HCI), and 66 to 68 (ESR). Residues 88 to 207 (DFRSRAIVDQ…KEINETGAET (120 aa)) enclose the GST C-terminal domain.

The protein belongs to the GST superfamily. Theta family. As to quaternary structure, homodimer.

The catalysed reaction is RX + glutathione = an S-substituted glutathione + a halide anion + H(+). Its function is as follows. Conjugation of reduced glutathione to a wide number of exogenous and endogenous hydrophobic electrophiles. The sequence is that of Glutathione S-transferase D7 from Anopheles gambiae (African malaria mosquito).